The chain runs to 248 residues: 2,3-bisphosphoglycerate-dependent phosphoglycerate mutase (248 aa).

Substrate-binding positions include 8–15, 21–22, Arg-60, 87–90, Lys-98, 114–115, and 183–184; these read RHGESTWN, TG, EKHY, RR, and GN. The active-site Tele-phosphohistidine intermediate is the His-9. Glu-87 acts as the Proton donor/acceptor in catalysis.

Belongs to the phosphoglycerate mutase family. BPG-dependent PGAM subfamily.

The catalysed reaction is (2R)-2-phosphoglycerate = (2R)-3-phosphoglycerate. The protein operates within carbohydrate degradation; glycolysis; pyruvate from D-glyceraldehyde 3-phosphate: step 3/5. In terms of biological role, catalyzes the interconversion of 2-phosphoglycerate and 3-phosphoglycerate. The polypeptide is 2,3-bisphosphoglycerate-dependent phosphoglycerate mutase (Elusimicrobium minutum (strain Pei191)).